Reading from the N-terminus, the 233-residue chain is Large ribosomal subunit protein uL1 (233 aa).

Belongs to the universal ribosomal protein uL1 family. Part of the 50S ribosomal subunit.

Binds directly to 23S rRNA. The L1 stalk is quite mobile in the ribosome, and is involved in E site tRNA release. In terms of biological role, protein L1 is also a translational repressor protein, it controls the translation of the L11 operon by binding to its mRNA. In Laribacter hongkongensis (strain HLHK9), this protein is Large ribosomal subunit protein uL1.